The chain runs to 485 residues: uncharacterized protein (485 aa).

Transmembrane regions (helical) follow at residues 79 to 99 (LVTL…LIFA), 117 to 137 (VFAL…FLVF), 139 to 159 (FFSG…LADL), 170 to 190 (VIYF…SGFI), 199 to 219 (WEFW…FLLL), 275 to 295 (ILIC…LVLI), 313 to 333 (GLMY…AMPI), 355 to 375 (LPMG…FGWT), 380 to 400 (IFWF…IMTS), 421 to 441 (GVKI…ESLF), and 448 to 468 (WGCT…PILF).

This sequence belongs to the major facilitator superfamily. CAR1 family.

The protein resides in the membrane. This is an uncharacterized protein from Schizosaccharomyces pombe (strain 972 / ATCC 24843) (Fission yeast).